The sequence spans 1109 residues: MEPSEVPGQNSKDNFLEVPNLSDSLCEDEEVKAIFKPGFSPQPSRRGSESSEEVYVHTASSGGRRVSFADNFGFNLVSVKEFDTWELPSVSTTFELGKDAFQTEEYVLSPLFDLPASKEDLMQQLQVQKAMLESTEYVPGSTSMKGIIRVLNISFEKLVYVRMSLDDWQTHYDILAEYVPNSCDGETDQFSFKISLVPPYQKDGSKVEFCIRYETSVGTFWSNNNGTNYTLVCQKKEPEPEPGKPLEEAPSKQKKGCLKVKSSKEESSETSEENNFENSKIADTYIPTIVCSHEEKEDLKSSYQNVKDVNTEHDEHNEKELELMINQRLIRTRCAASEYGKNTLSSDPSNIPNKPEELQKNQSHSEACTDLSQRLLSPGSSAESSLKGDFYHTEKYSSGNESSHQPSDMGEINPSLGGTTSDGSVQLHISSKEILDDNANPAHGSGRGEISCSFPGQLKASNLNKKYEGGAENSEMKDCECLPRDVHLKASDYFKKSTENRPSEEDYGTSKDNKEKRIQLDVDEKTSKNFRSIFYDQERNVGHLEITVEGIEASDRDLTSLPTKDTTIPTWAIMEDTFHSSRTPLGREEAVLTTPEHDLSSSEGTILGGLTGGVCSPRNGNVLKNDYLFQVEKRKSGWINPEDQNKDTQHQQSWNVLESQEKARGSKTNIAEQIKEQVDCEDMWEKRDNTGSLKATPAEALFTCQEAEHCELSPLADHGIPGKAEAGTAYIIKTTSETTPESMSAGEKAIIAKLPQETARSDRPMEVKETAFDPHEGRNDDSHYTLCQRDTVGVIDDNGVEKESHLDICNARLDEMRKEEAMSMHSPGKMRDREKLGIGNITSVEESSQVIANNEKATSRLDLHLEMPSADKKIFPENRDLGQVQELSKKTDIDNTVHSAFNSDTNRASRDDSLLSSHHTETSVLSCEQANAVKNTVTTTALQTSATESEYNCSPTRETQGQPASKPEEVSRGSRRVTSETRKEKCVGQMFQSGECNVEMSQGPMILVSESRENVERERHENEGLINSGDKEFESSASSSLPVQETQDQSNESLLSKYTNSKIPYFLLFLMFLVTVYHYDLMIGLAFYLFSLYWLYWEEGRQKESVKKK.

Serine 40 and serine 44 each carry phosphoserine; by GSK3. At serine 48 the chain carries Phosphoserine; by PKA and ISPK. Residue serine 51 is modified to Phosphoserine. Residue threonine 58 is modified to Phosphothreonine. The short motif at 64 to 67 is the PP1-binding motif element; sequence RRVS. Position 67 is a phosphoserine; by PKA (serine 67). Positions 124-232 constitute a CBM21 domain; the sequence is QLQVQKAMLE…NNNGTNYTLV (109 aa). The span at 236–251 shows a compositional bias: basic and acidic residues; that stretch reads KEPEPEPGKPLEEAPS. 4 disordered regions span residues 236–278, 340–424, 436–455, and 493–517; these read KEPE…NFEN, GKNT…SDGS, DDNA…CSFP, and YFKK…KEKR. Polar residues-rich tracts occupy residues 340–352, 360–384, and 396–406; these read GKNT…SNIP, KNQS…SAES, and YSSGNESSHQP. Serine 843 bears the Phosphoserine mark. Disordered stretches follow at residues 945–985 and 1011–1048; these read SATE…RKEK and SREN…ETQD. A compositionally biased stretch (polar residues) spans 951 to 963; that stretch reads YNCSPTRETQGQP. Basic and acidic residues-rich tracts occupy residues 966–985 and 1011–1034; these read KPEE…RKEK and SREN…KEFE. The segment covering 1035–1048 has biased composition (polar residues); that stretch reads SSASSSLPVQETQD. Residues 1066–1086 traverse the membrane as a helical segment; the sequence is FLLFLMFLVTVYHYDLMIGLA.

Interacts with PPP1CC catalytic subunit of PP1, and associates with glycogen. Phosphorylation at Ser-48 by ISPK stimulates the dephosphorylation of glycogen synthase and phosphorylase kinase. Skeletal muscle, diaphragm and cardiac muscle.

The protein resides in the membrane. Seems to act as a glycogen-targeting subunit for PP1. PP1 is essential for cell division, and participates in the regulation of glycogen metabolism, muscle contractility and protein synthesis. Plays an important role in glycogen synthesis but is not essential for insulin activation of glycogen synthase. This chain is Protein phosphatase 1 regulatory subunit 3A (PPP1R3A), found in Oryctolagus cuniculus (Rabbit).